The following is a 527-amino-acid chain: MTADLLPVRRALLSVSDKTGLVELATALAARGVELLSTGGTAKAIRDAGLAVKDVADVTGFPEMMDGRVKTLHPMVHGGLLGRSGLDDAVMAEHGIGAIDLLVLNLYPFESVTAKADCSLADAVENIDIGGPAMLRSAAKNFARVAVATDPSQYAELLASLEANNGQLTAATRFAFSVAAFNRVAQYDAAISNYLSAVTATDTAVPVRAEYPAQMNSTFVKVMDLRYGENPHQSGAFYRDLYPVPGTLATFQQLQGKELSYNNLADADAAWECVRQFDAPACVIVKHANPCGVAVGAGNGDAYELAYATDPTSAFGGIIAFNKPLDAATAKVILDRQFVEVLIAPDYEPAALEYAQKKANVRVLRIPHGDGLNNFDNKRVGSGLLLQSSDNRGMTRDELKVVSKLAPTDKQFTDLLFAWKVAKFVKSNAIVYAKDNRTIGVGAGQMSRVYSARIAGIKAADANLVVEGSVMASDAFFPFRDGIDAAAAAGIKAVIQPGGSMRDAEVIAAADEHGLAMVFTGVRHFRH.

Residues 1-149 enclose the MGS-like domain; it reads MTADLLPVRR…KNFARVAVAT (149 aa).

It belongs to the PurH family.

The catalysed reaction is (6R)-10-formyltetrahydrofolate + 5-amino-1-(5-phospho-beta-D-ribosyl)imidazole-4-carboxamide = 5-formamido-1-(5-phospho-D-ribosyl)imidazole-4-carboxamide + (6S)-5,6,7,8-tetrahydrofolate. It carries out the reaction IMP + H2O = 5-formamido-1-(5-phospho-D-ribosyl)imidazole-4-carboxamide. It participates in purine metabolism; IMP biosynthesis via de novo pathway; 5-formamido-1-(5-phospho-D-ribosyl)imidazole-4-carboxamide from 5-amino-1-(5-phospho-D-ribosyl)imidazole-4-carboxamide (10-formyl THF route): step 1/1. The protein operates within purine metabolism; IMP biosynthesis via de novo pathway; IMP from 5-formamido-1-(5-phospho-D-ribosyl)imidazole-4-carboxamide: step 1/1. The sequence is that of Bifunctional purine biosynthesis protein PurH from Stenotrophomonas maltophilia (strain R551-3).